Consider the following 240-residue polypeptide: Probable transcriptional regulatory protein YrbC (240 aa).

This sequence belongs to the TACO1 family.

It localises to the cytoplasm. The chain is Probable transcriptional regulatory protein YrbC (yrbC) from Bacillus subtilis (strain 168).